The sequence spans 448 residues: GTPase Der (448 aa).

EngA-type G domains follow at residues Phe-2 to Gln-171 and Pro-181 to Ser-364. GTP-binding positions include Gly-8–Ser-15, Asp-58–Phe-62, Asn-123–Asp-126, Gly-187–Ser-194, Asp-234–Ile-238, and Asn-305–Asp-308. Residues Lys-365–Lys-448 enclose the KH-like domain.

This sequence belongs to the TRAFAC class TrmE-Era-EngA-EngB-Septin-like GTPase superfamily. EngA (Der) GTPase family. Associates with the 50S ribosomal subunit.

In terms of biological role, GTPase that plays an essential role in the late steps of ribosome biogenesis. This chain is GTPase Der, found in Thermodesulfovibrio yellowstonii (strain ATCC 51303 / DSM 11347 / YP87).